The sequence spans 227 residues: Ribosomal RNA large subunit methyltransferase E (227 aa).

The S-adenosyl-L-methionine site is built by Gly-78, Trp-80, Asp-103, Asp-119, and Asp-143. Lys-183 functions as the Proton acceptor in the catalytic mechanism.

This sequence belongs to the class I-like SAM-binding methyltransferase superfamily. RNA methyltransferase RlmE family.

It localises to the cytoplasm. The enzyme catalyses uridine(2552) in 23S rRNA + S-adenosyl-L-methionine = 2'-O-methyluridine(2552) in 23S rRNA + S-adenosyl-L-homocysteine + H(+). Specifically methylates the uridine in position 2552 of 23S rRNA at the 2'-O position of the ribose in the fully assembled 50S ribosomal subunit. The polypeptide is Ribosomal RNA large subunit methyltransferase E (Rickettsia africae (strain ESF-5)).